A 272-amino-acid polypeptide reads, in one-letter code: Tropinone reductase-like 1 (272 aa).

17–41 lines the NAD(+) pocket; sequence IITGGASGIGACTAELFHENGAKVV. Residue serine 150 coordinates substrate. The Proton acceptor role is filled by tyrosine 163.

Belongs to the short-chain dehydrogenases/reductases (SDR) family.

In terms of biological role, has no tropinone reductase activity. This chain is Tropinone reductase-like 1, found in Erythroxylum coca (Coca plant).